Reading from the N-terminus, the 515-residue chain is Hopanoid C-3 methylase (515 aa).

In terms of domain architecture, B12-binding spans 8-141 (PSPLMYTKVF…ETLARRGNID (134 aa)). A Radical SAM core domain is found at 181–395 (GTLDPCASIE…DIQHAVLPTR (215 aa)). Positions 195, 199, and 202 each coordinate [4Fe-4S] cluster.

This sequence belongs to the radical SAM superfamily. [4Fe-4S] cluster serves as cofactor.

Its function is as follows. Required for methylation of hopanoids at the C-3 position. In Methylococcus capsulatus (strain ATCC 33009 / NCIMB 11132 / Bath), this protein is Hopanoid C-3 methylase.